The primary structure comprises 485 residues: Cysteine--tRNA ligase (485 aa).

C27 serves as a coordination point for Zn(2+). The 'HIGH' region signature appears at 29–39 (ITAYDLCHIGH). C208, H233, and E237 together coordinate Zn(2+). The 'KMSKS' region motif lies at 265–269 (KMSKS). Residue K268 coordinates ATP.

This sequence belongs to the class-I aminoacyl-tRNA synthetase family. In terms of assembly, monomer. Requires Zn(2+) as cofactor.

It localises to the cytoplasm. It carries out the reaction tRNA(Cys) + L-cysteine + ATP = L-cysteinyl-tRNA(Cys) + AMP + diphosphate. In Maridesulfovibrio salexigens (strain ATCC 14822 / DSM 2638 / NCIMB 8403 / VKM B-1763) (Desulfovibrio salexigens), this protein is Cysteine--tRNA ligase.